The primary structure comprises 228 residues: 3-oxoadipate CoA-transferase subunit A (228 aa).

Residue 25-31 coordinates CoA; that stretch reads GGFGTAG.

This sequence belongs to the 3-oxoacid CoA-transferase subunit A family. As to quaternary structure, heterodimer.

The enzyme catalyses 3-oxoadipate + succinyl-CoA = 3-oxoadipyl-CoA + succinate. It functions in the pathway aromatic compound metabolism; beta-ketoadipate pathway; acetyl-CoA and succinyl-CoA from 3-oxoadipate: step 1/2. This is 3-oxoadipate CoA-transferase subunit A (pcaI) from Acinetobacter baylyi (strain ATCC 33305 / BD413 / ADP1).